A 290-amino-acid polypeptide reads, in one-letter code: Forkhead box protein O3B (290 aa).

2 disordered regions span residues 1 to 30 (METD…TEEG) and 44 to 239 (AAAA…SSRR). Low complexity-rich tracts occupy residues 44–59 (AAAA…RGVH) and 75–91 (RTPA…EAPA). The residue at position 117 (Thr117) is a Phosphothreonine; by PKB/AKT1. Residues 142–153 (IPEEEDDEDDED) are compositionally biased toward acidic residues. The fork-head DNA-binding region spans 242–290 (WGNLSYADLITRAIESSPDRRLTLSQIYEWMVSCVPYFKDKGNSNSSAG).

The protein resides in the cytoplasm. It localises to the cytosol. Transcription factor. This Homo sapiens (Human) protein is Forkhead box protein O3B.